Here is a 915-residue protein sequence, read N- to C-terminus: DNA repair-scaffolding protein (915 aa).

Residues 1–15 (MPRGSRARGSKRKRS) are compositionally biased toward basic residues. 2 disordered regions span residues 1 to 30 (MPRGSRARGSKRKRSWNTECPSFPGERPLQ) and 56 to 114 (FQNT…EDKT). Residues 56–65 (FQNTSGNPSL) are compositionally biased toward polar residues. Residues 67–85 (AEEKTITEKHLELCPRPKQ) are compositionally biased toward basic and acidic residues. Positions 86–107 (ETTTSKSTSGLTDITWSSSGSD) are enriched in polar residues. The segment at 151–450 (EISDCASCAS…GTAWTHGHKE (300 aa)) is necessary for interaction with RAD51.

In terms of assembly, found in a complex, at least composed of BLM, RAD51 and SPIDR; the complex formation is mediated by SPIDR. Interacts (via C-terminal region) with BLM; the interaction is direct. Interacts with RAD51; the interaction is direct. Interacts (via the C-terminal region) with FIGNL1 (via N-terminal one-half region); the interaction is direct.

Its subcellular location is the nucleus. Plays a role in DNA double-strand break (DBS) repair via homologous recombination (HR). Serves as a scaffolding protein that helps to promote the recruitment of DNA-processing enzymes like the helicase BLM and recombinase RAD51 to site of DNA damage, and hence contributes to maintain genomic integrity. The chain is DNA repair-scaffolding protein (SPIDR) from Homo sapiens (Human).